The following is a 333-amino-acid chain: Acetyltransferase Pat (333 aa).

Residues 85–88 (GEIA), 95–96 (RT), and R135 contribute to the 3',5'-cyclic AMP site. Positions 153–317 (FYLRPVLPGD…DTVPFEPELI (165 aa)) constitute an N-acetyltransferase domain. E211 serves as a coordination point for Mg(2+). Substrate-binding positions include 237-239 (FTV), 245-250 (GRGIGS), N276, and R285.

Homodimer. Mg(2+) is required as a cofactor.

With respect to regulation, allosterically regulated by cAMP. Catalyzes specifically the acetylation of the epsilon-amino group of a highly conserved lysine residue in acetyl-CoA synthetase (ACS) and of the universal stress protein (USP) MSMEG_4207. Acetylation results in the inactivation of ACS activity and could be important for mycobacteria to adjust to environmental changes. This chain is Acetyltransferase Pat, found in Mycolicibacterium smegmatis (strain ATCC 700084 / mc(2)155) (Mycobacterium smegmatis).